Reading from the N-terminus, the 567-residue chain is Proline--tRNA ligase (567 aa).

It belongs to the class-II aminoacyl-tRNA synthetase family. ProS type 1 subfamily. In terms of assembly, homodimer.

The protein resides in the cytoplasm. It catalyses the reaction tRNA(Pro) + L-proline + ATP = L-prolyl-tRNA(Pro) + AMP + diphosphate. Functionally, catalyzes the attachment of proline to tRNA(Pro) in a two-step reaction: proline is first activated by ATP to form Pro-AMP and then transferred to the acceptor end of tRNA(Pro). As ProRS can inadvertently accommodate and process non-cognate amino acids such as alanine and cysteine, to avoid such errors it has two additional distinct editing activities against alanine. One activity is designated as 'pretransfer' editing and involves the tRNA(Pro)-independent hydrolysis of activated Ala-AMP. The other activity is designated 'posttransfer' editing and involves deacylation of mischarged Ala-tRNA(Pro). The misacylated Cys-tRNA(Pro) is not edited by ProRS. The protein is Proline--tRNA ligase of Idiomarina loihiensis (strain ATCC BAA-735 / DSM 15497 / L2-TR).